The following is a 607-amino-acid chain: Developmental gene 1062 protein (607 aa).

Disordered regions lie at residues 62–84, 334–451, and 568–602; these read LQGQ…HNNQ, ICDD…SNFQ, and DNNT…NDLL. Low complexity predominate over residues 334-363; sequence ICDDSSNSSTPSLSSYSNGNNKYNNNNNDS. The segment covering 364-382 has biased composition (acidic residues); that stretch reads SESDESDDDDNNDDDDNDS. 2 stretches are compositionally biased toward low complexity: residues 383-451 and 568-582; these read IDFN…SNFQ and DNNT…ISVN.

This Dictyostelium discoideum (Social amoeba) protein is Developmental gene 1062 protein (DG1062).